The sequence spans 568 residues: MLAASVLRLTLPLCWLVAPQPTQPERLFHSRDRSDLEPSPLSQAKPIADLHDAQSFLLKYGWSEIPSPKESAGVPVGFTLAQAVRRFQKANRLPASGELDSPTLAAMNKPRCGVPDTRLPPRAALPTPPALLTSLGLRPRARQKRFLQMLFPKPDGQQEDASDTGASRAFSKKTLTWRLVGDAYSSQLSGDEQRYIFRLAFRMWSEVTPLDFREDRTAPGTMVDIKLGFGRGRHLGCPRVFDGSGQEFAHAWRLGEIHFDDDEHFTPLSSDTGISLLKVAVHEIGHVLGLPHTYRVGSIMQPNYIPQEPAFELDWADRKAIQRLYGSCKGSFDTVFDWIRKERNQYGEVRVRFNTYFFRNSWYWLYENRNNRTRYGDPLQILTGWRGIPTQSIDAYVHVWSWGKDERYFFKGSQYWRYDSENDQAHTEDEQGRSYPKLISEGFPGIPSPLDTAFYDRRQQLIYFFKESLVFAFDVNRNQVLNSYPKKMSQVFPAIMPQNHPFRNLDSAYYSYAHNSIFFFKGNSYWKVVSDKDKQQNTRLPLNGLFPKKPVSEKWFDVCDVHTSTLNM.

Positions 1–24 are cleaved as a signal peptide; the sequence is MLAASVLRLTLPLCWLVAPQPTQP. Positions 25–143 are excised as a propeptide; the sequence is ERLFHSRDRS…SLGLRPRARQ (119 aa). A Cysteine switch motif is present at residues 110–117; the sequence is PRCGVPDT. Cys-112 and His-282 together coordinate Zn(2+). Glu-283 is a catalytic residue. Zn(2+)-binding residues include His-286 and His-292. An intrachain disulfide couples Cys-328 to Cys-559. Hemopexin repeat units lie at residues 329 to 388, 390 to 446, 447 to 495, and 502 to 558; these read KGSF…WRGI, TQSI…FPGI, PSPL…FPAI, and FRNL…WFDV. Residue Asn-371 is glycosylated (N-linked (GlcNAc...) asparagine).

Belongs to the peptidase M10A family. The cofactor is Zn(2+). Requires Ca(2+) as cofactor. Post-translationally, the precursor is cleaved by a furin endopeptidase.

Its subcellular location is the secreted. Plays a specialized role in the generation of left-right asymmetry during embryogenesis. May act as a negative regulator of the NOTCH-signaling pathway. Cleaves alpha-1-antitrypsin. This Mus musculus (Mouse) protein is Matrix metalloproteinase-21 (Mmp21).